The chain runs to 964 residues: Siderophore exporter MmpL5 (964 aa).

A run of 12 helical transmembrane segments spans residues 31–51 (FAVP…VTVP), 203–223 (SLQV…LLVY), 230–250 (AIML…VAFL), 255–275 (IIGL…AAAT), 302–322 (MFGG…GATF), 340–360 (AIGM…IIAV), 389–409 (WPGP…LTLP), 773–793 (TYDL…IMLI), 803–823 (VIVG…VLIW), 826–846 (ILGI…LLAV), 880–900 (VVTA…VSEL), and 923–943 (SFMT…PQVV).

The protein belongs to the resistance-nodulation-cell division (RND) (TC 2.A.6) family. MmpL subfamily. As to quaternary structure, interacts with MmpS5.

The protein localises to the cell inner membrane. Its function is as follows. Part of an export system, which is required for biosynthesis and secretion of siderophores. In Mycobacterium tuberculosis (strain CDC 1551 / Oshkosh), this protein is Siderophore exporter MmpL5 (mmpL5).